The following is a 239-amino-acid chain: Succinate dehydrogenase [ubiquinone] iron-sulfur subunit (239 aa).

The 2Fe-2S ferredoxin-type domain maps to 11–100 (FKVYRWNPDK…EMKIYPLPHM (90 aa)). Residues Cys-61, Cys-66, Cys-69, and Cys-81 each contribute to the [2Fe-2S] cluster site. The region spanning 141–171 (DREKLDGLYECVLCACCSTSCPSYWWNSDKY) is the 4Fe-4S ferredoxin-type domain. Positions 151, 154, and 157 each coordinate [4Fe-4S] cluster. Cys-161 serves as a coordination point for [3Fe-4S] cluster. Trp-166 lines the a ubiquinone pocket. [3Fe-4S] cluster-binding residues include Cys-208 and Cys-214. Residue Cys-218 coordinates [4Fe-4S] cluster.

This sequence belongs to the succinate dehydrogenase/fumarate reductase iron-sulfur protein family. In terms of assembly, component of complex II composed of four subunits: a flavoprotein (FP), an iron-sulfur protein (IP), and a cytochrome b composed of a large and a small subunit. It depends on [2Fe-2S] cluster as a cofactor. The cofactor is [3Fe-4S] cluster. Requires [4Fe-4S] cluster as cofactor.

It is found in the mitochondrion inner membrane. It carries out the reaction a quinone + succinate = fumarate + a quinol. Its pathway is carbohydrate metabolism; tricarboxylic acid cycle; fumarate from succinate (eukaryal route): step 1/1. Iron-sulfur protein (IP) subunit of succinate dehydrogenase (SDH) that is involved in complex II of the mitochondrial electron transport chain and is responsible for transferring electrons from succinate to ubiquinone (coenzyme Q). This Reclinomonas americana protein is Succinate dehydrogenase [ubiquinone] iron-sulfur subunit (SDH2).